Reading from the N-terminus, the 259-residue chain is Ubiquinone/menaquinone biosynthesis C-methyltransferase UbiE (259 aa).

Residues Thr82, Asp103, 131-132, and Ser148 each bind S-adenosyl-L-methionine; that span reads NA.

The protein belongs to the class I-like SAM-binding methyltransferase superfamily. MenG/UbiE family.

The enzyme catalyses a 2-demethylmenaquinol + S-adenosyl-L-methionine = a menaquinol + S-adenosyl-L-homocysteine + H(+). It catalyses the reaction a 2-methoxy-6-(all-trans-polyprenyl)benzene-1,4-diol + S-adenosyl-L-methionine = a 5-methoxy-2-methyl-3-(all-trans-polyprenyl)benzene-1,4-diol + S-adenosyl-L-homocysteine + H(+). It functions in the pathway quinol/quinone metabolism; menaquinone biosynthesis; menaquinol from 1,4-dihydroxy-2-naphthoate: step 2/2. It participates in cofactor biosynthesis; ubiquinone biosynthesis. In terms of biological role, methyltransferase required for the conversion of demethylmenaquinol (DMKH2) to menaquinol (MKH2) and the conversion of 2-polyprenyl-6-methoxy-1,4-benzoquinol (DDMQH2) to 2-polyprenyl-3-methyl-6-methoxy-1,4-benzoquinol (DMQH2). The polypeptide is Ubiquinone/menaquinone biosynthesis C-methyltransferase UbiE (Vibrio parahaemolyticus serotype O3:K6 (strain RIMD 2210633)).